A 218-amino-acid chain; its full sequence is Ribose-5-phosphate isomerase A (218 aa).

Substrate is bound by residues Thr28–Thr31, Asp81–Asp84, and Lys94–Gly97. Glu103 (proton acceptor) is an active-site residue. Lys121 lines the substrate pocket.

It belongs to the ribose 5-phosphate isomerase family. As to quaternary structure, homodimer.

It catalyses the reaction aldehydo-D-ribose 5-phosphate = D-ribulose 5-phosphate. It participates in carbohydrate degradation; pentose phosphate pathway; D-ribose 5-phosphate from D-ribulose 5-phosphate (non-oxidative stage): step 1/1. In terms of biological role, catalyzes the reversible conversion of ribose-5-phosphate to ribulose 5-phosphate. The protein is Ribose-5-phosphate isomerase A of Vibrio atlanticus (strain LGP32) (Vibrio splendidus (strain Mel32)).